The chain runs to 352 residues: Biotin synthase (352 aa).

The Radical SAM core domain occupies 44 to 262 (NRVQVSTLLS…LAVARIMMPK (219 aa)). Cysteine 59, cysteine 63, and cysteine 66 together coordinate [4Fe-4S] cluster. [2Fe-2S] cluster-binding residues include cysteine 103, cysteine 134, cysteine 194, and arginine 266.

Belongs to the radical SAM superfamily. Biotin synthase family. In terms of assembly, homodimer. [4Fe-4S] cluster is required as a cofactor. Requires [2Fe-2S] cluster as cofactor.

It catalyses the reaction (4R,5S)-dethiobiotin + (sulfur carrier)-SH + 2 reduced [2Fe-2S]-[ferredoxin] + 2 S-adenosyl-L-methionine = (sulfur carrier)-H + biotin + 2 5'-deoxyadenosine + 2 L-methionine + 2 oxidized [2Fe-2S]-[ferredoxin]. It participates in cofactor biosynthesis; biotin biosynthesis; biotin from 7,8-diaminononanoate: step 2/2. Its function is as follows. Catalyzes the conversion of dethiobiotin (DTB) to biotin by the insertion of a sulfur atom into dethiobiotin via a radical-based mechanism. The protein is Biotin synthase of Pseudomonas paraeruginosa (strain DSM 24068 / PA7) (Pseudomonas aeruginosa (strain PA7)).